We begin with the raw amino-acid sequence, 441 residues long: GTPase Der (441 aa).

EngA-type G domains follow at residues 4 to 168 (PVVA…PEDI) and 177 to 352 (IRIA…EQNS). GTP contacts are provided by residues 10–17 (GRPNVGKS), 57–61 (DTGGI), 121–124 (NKVE), 183–190 (GRPNVGKS), 230–234 (DTAGM), and 295–298 (NKWD). One can recognise a KH-like domain in the interval 353 to 437 (TRVATATLNT…PIRMIVRQKD (85 aa)).

The protein belongs to the TRAFAC class TrmE-Era-EngA-EngB-Septin-like GTPase superfamily. EngA (Der) GTPase family. As to quaternary structure, associates with the 50S ribosomal subunit.

GTPase that plays an essential role in the late steps of ribosome biogenesis. In Desulfitobacterium hafniense (strain Y51), this protein is GTPase Der.